Here is a 211-residue protein sequence, read N- to C-terminus: Thiamine-phosphate synthase (211 aa).

Residues 35–39 (QLRDK) and asparagine 67 contribute to the 4-amino-2-methyl-5-(diphosphooxymethyl)pyrimidine site. Residues aspartate 68 and aspartate 87 each coordinate Mg(2+). Serine 106 serves as a coordination point for 4-amino-2-methyl-5-(diphosphooxymethyl)pyrimidine. Position 132 to 134 (132 to 134 (TGS)) interacts with 2-[(2R,5Z)-2-carboxy-4-methylthiazol-5(2H)-ylidene]ethyl phosphate. Lysine 135 provides a ligand contact to 4-amino-2-methyl-5-(diphosphooxymethyl)pyrimidine. 2-[(2R,5Z)-2-carboxy-4-methylthiazol-5(2H)-ylidene]ethyl phosphate is bound by residues glycine 163 and 183–184 (IS).

The protein belongs to the thiamine-phosphate synthase family. Mg(2+) serves as cofactor.

It carries out the reaction 2-[(2R,5Z)-2-carboxy-4-methylthiazol-5(2H)-ylidene]ethyl phosphate + 4-amino-2-methyl-5-(diphosphooxymethyl)pyrimidine + 2 H(+) = thiamine phosphate + CO2 + diphosphate. The enzyme catalyses 2-(2-carboxy-4-methylthiazol-5-yl)ethyl phosphate + 4-amino-2-methyl-5-(diphosphooxymethyl)pyrimidine + 2 H(+) = thiamine phosphate + CO2 + diphosphate. It catalyses the reaction 4-methyl-5-(2-phosphooxyethyl)-thiazole + 4-amino-2-methyl-5-(diphosphooxymethyl)pyrimidine + H(+) = thiamine phosphate + diphosphate. The protein operates within cofactor biosynthesis; thiamine diphosphate biosynthesis; thiamine phosphate from 4-amino-2-methyl-5-diphosphomethylpyrimidine and 4-methyl-5-(2-phosphoethyl)-thiazole: step 1/1. In terms of biological role, condenses 4-methyl-5-(beta-hydroxyethyl)thiazole monophosphate (THZ-P) and 2-methyl-4-amino-5-hydroxymethyl pyrimidine pyrophosphate (HMP-PP) to form thiamine monophosphate (TMP). This Methanoculleus marisnigri (strain ATCC 35101 / DSM 1498 / JR1) protein is Thiamine-phosphate synthase.